The primary structure comprises 232 residues: MALIEKMTKDIQQKGGLIVSCQPVDNSPMDKPDIVAAMAQAAVNAGAVAVRIEGIDNLKATRPLIDVPIIGIVKRDLPDSPVRITPWLNDIEALAAAGADIIAFDGTDRLRPVPVKALLEHVHRLGKLAMADCATFNEGMYCHQLGTEFIGSTMSGYTGGEIPKLPDLQLVTALAEQGCRVIAEGRYNTPMMAARGMQAGAWAVTVGSALTRLEHVCEWFTQALKWQQELDK.

It belongs to the NanE family.

The catalysed reaction is an N-acyl-D-glucosamine 6-phosphate = an N-acyl-D-mannosamine 6-phosphate. It functions in the pathway amino-sugar metabolism; N-acetylneuraminate degradation; D-fructose 6-phosphate from N-acetylneuraminate: step 3/5. Converts N-acetylmannosamine-6-phosphate (ManNAc-6-P) to N-acetylglucosamine-6-phosphate (GlcNAc-6-P). The sequence is that of Putative N-acetylmannosamine-6-phosphate 2-epimerase from Proteus mirabilis (strain HI4320).